Consider the following 209-residue polypeptide: ATP-dependent Clp protease proteolytic subunit (209 aa).

The active-site Nucleophile is the Ser107. Residue His132 is part of the active site.

The protein belongs to the peptidase S14 family. Fourteen ClpP subunits assemble into 2 heptameric rings which stack back to back to give a disk-like structure with a central cavity, resembling the structure of eukaryotic proteasomes.

The protein localises to the cytoplasm. It catalyses the reaction Hydrolysis of proteins to small peptides in the presence of ATP and magnesium. alpha-casein is the usual test substrate. In the absence of ATP, only oligopeptides shorter than five residues are hydrolyzed (such as succinyl-Leu-Tyr-|-NHMec, and Leu-Tyr-Leu-|-Tyr-Trp, in which cleavage of the -Tyr-|-Leu- and -Tyr-|-Trp bonds also occurs).. In terms of biological role, cleaves peptides in various proteins in a process that requires ATP hydrolysis. Has a chymotrypsin-like activity. Plays a major role in the degradation of misfolded proteins. The sequence is that of ATP-dependent Clp protease proteolytic subunit from Methylobacterium nodulans (strain LMG 21967 / CNCM I-2342 / ORS 2060).